Consider the following 359-residue polypeptide: UPF0283 membrane protein RL2646 (359 aa).

The tract at residues 1-48 (MSKPPSDPPRRAPAAFIYEDEATERRDNGRQGGERRKPESFSEHIVVT) is disordered. Positions 23 to 42 (TERRDNGRQGGERRKPESFS) are enriched in basic and acidic residues. 2 consecutive transmembrane segments (helical) span residues 77–97 (FGKI…GLWT) and 111–131 (LGYA…ALVI).

The protein belongs to the UPF0283 family.

Its subcellular location is the cell inner membrane. This is UPF0283 membrane protein RL2646 from Rhizobium johnstonii (strain DSM 114642 / LMG 32736 / 3841) (Rhizobium leguminosarum bv. viciae).